We begin with the raw amino-acid sequence, 240 residues long: Ribonuclease PH (240 aa).

Residues Arg-87 and 125–127 (GTR) each bind phosphate.

Belongs to the RNase PH family. As to quaternary structure, homohexameric ring arranged as a trimer of dimers.

It catalyses the reaction tRNA(n+1) + phosphate = tRNA(n) + a ribonucleoside 5'-diphosphate. Functionally, phosphorolytic 3'-5' exoribonuclease that plays an important role in tRNA 3'-end maturation. Removes nucleotide residues following the 3'-CCA terminus of tRNAs; can also add nucleotides to the ends of RNA molecules by using nucleoside diphosphates as substrates, but this may not be physiologically important. Probably plays a role in initiation of 16S rRNA degradation (leading to ribosome degradation) during starvation. The protein is Ribonuclease PH of Pseudomonas fluorescens (strain Pf0-1).